Here is a 146-residue protein sequence, read N- to C-terminus: Zinc metalloproteinase-disintegrin salmosin-3 (146 aa).

The 57-residue stretch at Ser1–Pro57 folds into the Peptidase M12B domain. 9 disulfides stabilise this stretch: Cys2–Cys37, Cys4–Cys9, Cys68–Cys87, Cys79–Cys97, Cys81–Cys92, Cys91–Cys114, Cys105–Cys111, Cys110–Cys135, and Cys123–Cys142. The region spanning Pro65–Thr146 is the Disintegrin domain. A Cell attachment site motif is present at residues Arg127–Asp129.

Belongs to the venom metalloproteinase (M12B) family. P-II subfamily. P-IIb sub-subfamily. Monomer (disintegrin). Zn(2+) serves as cofactor. Expressed by the venom gland.

Its subcellular location is the secreted. Snake venom zinc metalloproteinase that inhibits ADP-induced platelet aggregation (probably by binding integrin alpha-IIb/beta-3 (ITGA2B/ITGB3)) and degrades fibrinogen. The sequence is that of Zinc metalloproteinase-disintegrin salmosin-3 from Gloydius brevicauda (Korean slamosa snake).